Here is a 1384-residue protein sequence, read N- to C-terminus: CHD3-type chromatin-remodeling factor PICKLE (1384 aa).

S23 carries the phosphoserine modification. The PHD-type zinc-finger motif lies at 49-96 (ENACQACGESTNLVSCNTCTYAFHAKCLVPPLKDASVENWRCPECVSP). Chromo domains lie at 98–180 (NEID…NSED) and 190–249 (TTVD…RSKD). Residues 285–471 (RFSWSKQTHV…FMLMHFLDAG (187 aa)) enclose the Helicase ATP-binding domain. 298-305 (DEMGLGKT) is an ATP binding site. A Nuclear localization signal motif is present at residues 376 to 383 (KKKKSGQI). Positions 422 to 425 (DEGH) match the DEAH box motif. Positions 599 to 760 (LLDKMMVKLK…NINQEELDDI (162 aa)) constitute a Helicase C-terminal domain. Acidic residues predominate over residues 893-912 (AGLEDVSSDGDESYEAESTD). Disordered regions lie at residues 893-941 (AGLE…TPLM), 1122-1152 (GLQG…NNNA), 1313-1344 (SDQS…PLRG), and 1365-1384 (VDVK…MVVD). Positions 1138 to 1152 (TNQNPGSVITGNNNA) are enriched in polar residues. Basic and acidic residues-rich tracts occupy residues 1316–1341 (SKSH…ETKP) and 1367–1384 (VKME…MVVD).

The protein belongs to the SNF2/RAD54 helicase family. In terms of assembly, interacts with TAF12B. As to expression, mostly expressed in tissue undergoing significant differentiation (meristems and primordia) such as young seedlings, influorescent tissue and young siliques, but not in endosperm and seed coat (at protein level). Levels decrease as organs age. Also present in trichomes.

It localises to the nucleus. Chromatin remodeling factor that represses the expression of embryonic trait genes (such as NFYB9/LEC1) upon and after seed germination and thus enables the developmental switch to post-germinative growth. Silences some MADS-box proteins such as PHE1 and PHE2. Plays a role during carpel differentiation. Regulates late processes in cytokinin signaling. This is CHD3-type chromatin-remodeling factor PICKLE (PKL) from Arabidopsis thaliana (Mouse-ear cress).